Consider the following 211-residue polypeptide: Thiamine-phosphate synthase (211 aa).

4-amino-2-methyl-5-(diphosphooxymethyl)pyrimidine contacts are provided by residues 37-41 (QLRIK) and N69. The Mg(2+) site is built by D70 and D89. S108 serves as a coordination point for 4-amino-2-methyl-5-(diphosphooxymethyl)pyrimidine. 134–136 (TQT) provides a ligand contact to 2-[(2R,5Z)-2-carboxy-4-methylthiazol-5(2H)-ylidene]ethyl phosphate. 4-amino-2-methyl-5-(diphosphooxymethyl)pyrimidine is bound at residue K137. Residues G166 and 186–187 (VS) each bind 2-[(2R,5Z)-2-carboxy-4-methylthiazol-5(2H)-ylidene]ethyl phosphate.

It belongs to the thiamine-phosphate synthase family. It depends on Mg(2+) as a cofactor.

It catalyses the reaction 2-[(2R,5Z)-2-carboxy-4-methylthiazol-5(2H)-ylidene]ethyl phosphate + 4-amino-2-methyl-5-(diphosphooxymethyl)pyrimidine + 2 H(+) = thiamine phosphate + CO2 + diphosphate. The catalysed reaction is 2-(2-carboxy-4-methylthiazol-5-yl)ethyl phosphate + 4-amino-2-methyl-5-(diphosphooxymethyl)pyrimidine + 2 H(+) = thiamine phosphate + CO2 + diphosphate. The enzyme catalyses 4-methyl-5-(2-phosphooxyethyl)-thiazole + 4-amino-2-methyl-5-(diphosphooxymethyl)pyrimidine + H(+) = thiamine phosphate + diphosphate. The protein operates within cofactor biosynthesis; thiamine diphosphate biosynthesis; thiamine phosphate from 4-amino-2-methyl-5-diphosphomethylpyrimidine and 4-methyl-5-(2-phosphoethyl)-thiazole: step 1/1. Functionally, condenses 4-methyl-5-(beta-hydroxyethyl)thiazole monophosphate (THZ-P) and 2-methyl-4-amino-5-hydroxymethyl pyrimidine pyrophosphate (HMP-PP) to form thiamine monophosphate (TMP). This Escherichia coli (strain SE11) protein is Thiamine-phosphate synthase.